Here is a 682-residue protein sequence, read N- to C-terminus: Serine/threonine-protein kinase PAK 6 (682 aa).

4 disordered regions span residues 1–30 (MFRKKKKKRPEISAPQNFQHRVHTSFDPKE), 132–170 (SPQSEHTDPHGLYLSCNGGTPAGHRQVPWPEPQSPQALP), 200–256 (LQSS…QESS), and 270–367 (PATG…NLYL). The CRIB domain maps to 12-25 (ISAPQNFQHRVHTS). The interval 26-407 (FDPKEGKFVG…VVDQGDPRLL (382 aa)) is linker. Polar residues-rich tracts occupy residues 270-279 (PATGAASSSK) and 297-334 (KDSSSNLVAKAQSLPSEQPMGTFSPLTTSDTSSPQKSL). Residues 408 to 659 (LDSYVKIGEG…AQELLDHPFL (252 aa)) enclose the Protein kinase domain. ATP-binding positions include 414–422 (IGEGSTGIV) and Lys437. Catalysis depends on Asp527, which acts as the Proton acceptor. At Ser561 the chain carries Phosphoserine; by autocatalysis.

The protein belongs to the protein kinase superfamily. STE Ser/Thr protein kinase family. STE20 subfamily. In terms of assembly, interacts tightly with GTP-bound but not GDP-bound CDC42/p21 and RAC1. Interacts with the androgen receptor AR. Interacts with IQGAP1 and PPM1B. Post-translationally, autophosphorylated. Phosphorylated by MAP2K6/MAPKK6, leading to PAK6 activation.

It is found in the cytoplasm. It localises to the nucleus. It carries out the reaction L-seryl-[protein] + ATP = O-phospho-L-seryl-[protein] + ADP + H(+). The catalysed reaction is L-threonyl-[protein] + ATP = O-phospho-L-threonyl-[protein] + ADP + H(+). Serine/threonine protein kinase that plays a role in the regulation of gene transcription. The kinase activity is induced by various effectors including AR or MAP2K6/MAPKK6. Phosphorylates the DNA-binding domain of androgen receptor/AR and thereby inhibits AR-mediated transcription. Also inhibits ESR1-mediated transcription. May play a role in cytoskeleton regulation by interacting with IQGAP1. May protect cells from apoptosis through phosphorylation of BAD. This Mus musculus (Mouse) protein is Serine/threonine-protein kinase PAK 6 (Pak6).